We begin with the raw amino-acid sequence, 366 residues long: Septin-1 (366 aa).

Residues 22–295 enclose the Septin-type G domain; it reads KGFDFTLMVA…EGYRARCLQS (274 aa). Residues 32–39 are G1 motif; it reads GESGLGKS. Residues 32 to 39, T66, G92, and 171 to 179 each bind GTP; these read GESGLGKS and KADALMPRE. The G3 motif stretch occupies residues 89–92; that stretch reads DTPG. The interval 170–173 is G4 motif; sequence GKAD. Phosphoserine is present on S206. The GTP site is built by G229 and R244. Phosphoserine is present on S247. Residue T250 is modified to Phosphothreonine. Residues S306 and S314 each carry the phosphoserine; by AURKB modification. The segment at 347–366 is disordered; it reads EKMQAQMQQSQAQGEQSDVL. Over residues 349-366 the composition is skewed to low complexity; it reads MQAQMQQSQAQGEQSDVL.

The protein belongs to the TRAFAC class TrmE-Era-EngA-EngB-Septin-like GTPase superfamily. Septin GTPase family. In terms of assembly, septins polymerize into heterooligomeric protein complexes that form filaments, and can associate with cellular membranes, actin filaments and microtubules. GTPase activity is required for filament formation. Interacts with AURKB.

It localises to the cytoplasm. The protein resides in the cytoskeleton. Its subcellular location is the microtubule organizing center. The protein localises to the centrosome. It is found in the midbody. Filament-forming cytoskeletal GTPase. May play a role in cytokinesis (Potential). This Mus musculus (Mouse) protein is Septin-1.